The sequence spans 481 residues: Aspartyl/glutamyl-tRNA(Asn/Gln) amidotransferase subunit B (481 aa).

The protein belongs to the GatB/GatE family. GatB subfamily. In terms of assembly, heterotrimer of A, B and C subunits.

The enzyme catalyses L-glutamyl-tRNA(Gln) + L-glutamine + ATP + H2O = L-glutaminyl-tRNA(Gln) + L-glutamate + ADP + phosphate + H(+). It carries out the reaction L-aspartyl-tRNA(Asn) + L-glutamine + ATP + H2O = L-asparaginyl-tRNA(Asn) + L-glutamate + ADP + phosphate + 2 H(+). Functionally, allows the formation of correctly charged Asn-tRNA(Asn) or Gln-tRNA(Gln) through the transamidation of misacylated Asp-tRNA(Asn) or Glu-tRNA(Gln) in organisms which lack either or both of asparaginyl-tRNA or glutaminyl-tRNA synthetases. The reaction takes place in the presence of glutamine and ATP through an activated phospho-Asp-tRNA(Asn) or phospho-Glu-tRNA(Gln). The polypeptide is Aspartyl/glutamyl-tRNA(Asn/Gln) amidotransferase subunit B (Pseudomonas paraeruginosa (strain DSM 24068 / PA7) (Pseudomonas aeruginosa (strain PA7))).